We begin with the raw amino-acid sequence, 150 residues long: D-aminoacyl-tRNA deacylase (150 aa).

The Gly-cisPro motif, important for rejection of L-amino acids signature appears at 138–139; that stretch reads GP.

This sequence belongs to the DTD family. Homodimer.

It is found in the cytoplasm. It catalyses the reaction glycyl-tRNA(Ala) + H2O = tRNA(Ala) + glycine + H(+). The catalysed reaction is a D-aminoacyl-tRNA + H2O = a tRNA + a D-alpha-amino acid + H(+). Functionally, an aminoacyl-tRNA editing enzyme that deacylates mischarged D-aminoacyl-tRNAs. Also deacylates mischarged glycyl-tRNA(Ala), protecting cells against glycine mischarging by AlaRS. Acts via tRNA-based rather than protein-based catalysis; rejects L-amino acids rather than detecting D-amino acids in the active site. By recycling D-aminoacyl-tRNA to D-amino acids and free tRNA molecules, this enzyme counteracts the toxicity associated with the formation of D-aminoacyl-tRNA entities in vivo and helps enforce protein L-homochirality. The protein is D-aminoacyl-tRNA deacylase of Petrotoga mobilis (strain DSM 10674 / SJ95).